Consider the following 875-residue polypeptide: cGMP-specific 3',5'-cyclic phosphodiesterase (875 aa).

Disordered stretches follow at residues 1–29 and 78–102; these read MERA…DQDS and SCSC…RKIS. Positions 10-22 are enriched in low complexity; sequence QQRQQQQPQQQKQ. A compositionally biased stretch (polar residues) spans 78-101; sequence SCSCPLQQSPRADNSAPGTPTRKI. At serine 102 the chain carries Phosphoserine. GAF domains lie at 164 to 314 and 346 to 503; these read DVTA…GIVL and SLEV…GLGI. The 325-residue stretch at 536–860 folds into the PDEase domain; it reads ETRELQSLAA…QKWQALAEQQ (325 aa). The active-site Proton donor is the histidine 613. 4 residues coordinate Zn(2+): histidine 617, histidine 653, aspartate 654, and aspartate 764. A Mg(2+)-binding site is contributed by aspartate 654. Glutamine 817 serves as a coordination point for 3',5'-cyclic GMP.

Belongs to the cyclic nucleotide phosphodiesterase family. Requires Zn(2+) as cofactor. Mg(2+) serves as cofactor. In terms of processing, phosphorylation is regulated by binding of cGMP to the two allosteric sites. Phosphorylation by PRKG1 leads to its activation. In terms of tissue distribution, expressed in aortic smooth muscle cells, heart, placenta, skeletal muscle and pancreas and, to a much lesser extent, in brain, liver and lung.

The catalysed reaction is 3',5'-cyclic GMP + H2O = GMP + H(+). It functions in the pathway purine metabolism; 3',5'-cyclic GMP degradation; GMP from 3',5'-cyclic GMP: step 1/1. With respect to regulation, sildenafil (Viagra) is a highly selective and potent inhibitor of PDE5A and is effective in the treatment of penile erectile dysfunction. Also inhibited by zaprinast. Plays a role in signal transduction by regulating the intracellular concentration of cyclic nucleotides. This phosphodiesterase catalyzes the specific hydrolysis of cGMP to 5'-GMP. Specifically regulates nitric-oxide-generated cGMP. This chain is cGMP-specific 3',5'-cyclic phosphodiesterase, found in Homo sapiens (Human).